The following is a 450-amino-acid chain: Trigger factor (450 aa).

The PPIase FKBP-type domain occupies 161–246 (GDRVVIDFKG…VKTVEAPEYP (86 aa)). A disordered region spans residues 422 to 450 (PMSLQELMSPQQPEAESAEGESKQDETKE). Residues 441–450 (GESKQDETKE) show a composition bias toward basic and acidic residues.

Belongs to the FKBP-type PPIase family. Tig subfamily.

It is found in the cytoplasm. It carries out the reaction [protein]-peptidylproline (omega=180) = [protein]-peptidylproline (omega=0). In terms of biological role, involved in protein export. Acts as a chaperone by maintaining the newly synthesized protein in an open conformation. Functions as a peptidyl-prolyl cis-trans isomerase. This chain is Trigger factor, found in Alkalilimnicola ehrlichii (strain ATCC BAA-1101 / DSM 17681 / MLHE-1).